A 344-amino-acid chain; its full sequence is Ion-translocating oxidoreductase complex subunit D (344 aa).

Helical transmembrane passes span 23–43 (LVLG…GAGT), 44–64 (LLNL…MLAL), 80–100 (VTAL…LTLV), and 120–140 (PFNP…LEMT). Position 172 is an FMN phosphoryl threonine (T172). 5 helical membrane-spanning segments follow: residues 198 to 218 (LGGA…LFLL), 222 to 242 (LFTW…SLLF), 252 to 272 (GSPL…FIVT), 285 to 305 (LLFG…GGYP), and 306 to 326 (DGVA…DYYT).

Belongs to the NqrB/RnfD family. In terms of assembly, the complex is composed of six subunits: RnfA, RnfB, RnfC, RnfD, RnfE and RnfG. FMN serves as cofactor.

It is found in the cell inner membrane. Functionally, part of a membrane-bound complex that couples electron transfer with translocation of ions across the membrane. In Pseudomonas paraeruginosa (strain DSM 24068 / PA7) (Pseudomonas aeruginosa (strain PA7)), this protein is Ion-translocating oxidoreductase complex subunit D.